The chain runs to 163 residues: Probable histone H2A.4 (163 aa).

Disordered stretches follow at residues 1–30 (MEVG…VSRS) and 134–163 (SAAA…AAAA). Residues 12–21 (GAGGRRGGGG) are compositionally biased toward gly residues. A compositionally biased stretch (basic residues) spans 147–163 (KSPKKATTKSPKKAAAA). Short sequence motifs (SPKK motif) lie at residues 148 to 151 (SPKK) and 156 to 159 (SPKK).

The protein belongs to the histone H2A family. The nucleosome is a histone octamer containing two molecules each of H2A, H2B, H3 and H4 assembled in one H3-H4 heterotetramer and two H2A-H2B heterodimers. The octamer wraps approximately 147 bp of DNA.

The protein resides in the nucleus. Its subcellular location is the chromosome. In terms of biological role, core component of nucleosome. Nucleosomes wrap and compact DNA into chromatin, limiting DNA accessibility to the cellular machineries which require DNA as a template. Histones thereby play a central role in transcription regulation, DNA repair, DNA replication and chromosomal stability. DNA accessibility is regulated via a complex set of post-translational modifications of histones, also called histone code, and nucleosome remodeling. The protein is Probable histone H2A.4 of Oryza sativa subsp. indica (Rice).